Here is a 342-residue protein sequence, read N- to C-terminus: D-erythrose-4-phosphate dehydrogenase (342 aa).

11–12 contacts NAD(+); that stretch reads RV. Substrate-binding positions include 153 to 155, arginine 199, 212 to 213, and arginine 235; these read SCT and TK. Cysteine 154 acts as the Nucleophile in catalysis. Asparagine 317 is a binding site for NAD(+).

This sequence belongs to the glyceraldehyde-3-phosphate dehydrogenase family. Epd subfamily. As to quaternary structure, homotetramer.

Its subcellular location is the cytoplasm. It carries out the reaction D-erythrose 4-phosphate + NAD(+) + H2O = 4-phospho-D-erythronate + NADH + 2 H(+). The protein operates within cofactor biosynthesis; pyridoxine 5'-phosphate biosynthesis; pyridoxine 5'-phosphate from D-erythrose 4-phosphate: step 1/5. Catalyzes the NAD-dependent conversion of D-erythrose 4-phosphate to 4-phosphoerythronate. The chain is D-erythrose-4-phosphate dehydrogenase from Pseudoalteromonas atlantica (strain T6c / ATCC BAA-1087).